An 85-amino-acid polypeptide reads, in one-letter code: Small ribosomal subunit protein bS20 (85 aa).

The segment at 1-24 (MANIKSAIKRAKLSEERRSHNASI) is disordered.

The protein belongs to the bacterial ribosomal protein bS20 family.

In terms of biological role, binds directly to 16S ribosomal RNA. This is Small ribosomal subunit protein bS20 from Bacillus mycoides (strain KBAB4) (Bacillus weihenstephanensis).